Consider the following 552-residue polypeptide: Thermosome subunit beta (552 aa).

The segment at 531 to 552 is disordered; sequence AGKKGGSEPGGKKEKEEKSSED. Basic and acidic residues predominate over residues 540–552; sequence GGKKEKEEKSSED.

The protein belongs to the TCP-1 chaperonin family. Forms a heterooligomeric complex of two stacked nine-membered rings; one of alpha and the other of beta subunits. Sometimes called a 'rosettasome'.

It localises to the cytoplasm. It carries out the reaction ATP + H2O = ADP + phosphate + H(+). Functionally, molecular chaperone; binds unfolded polypeptides in vitro, stimulates protein folding and has ATPase activity. One of the most abundant proteins in the cell at all temperatures. In Saccharolobus shibatae (strain ATCC 51178 / DSM 5389 / JCM 8931 / NBRC 15437 / B12) (Sulfolobus shibatae), this protein is Thermosome subunit beta (thsB).